A 565-amino-acid chain; its full sequence is Periplasmic trehalase (565 aa).

An N-terminal signal peptide occupies residues 1–30 (MKSPTPSRPQKMALIPACIFLCFAALSVQA). Substrate contacts are provided by residues Arg152, 159 to 160 (WD), Asn196, 205 to 207 (RSQ), 277 to 279 (RPE), and Gly310. Residues Asp312 and Glu496 each act as proton donor/acceptor in the active site. Glu511 contributes to the substrate binding site. Residues 539–565 (CDNVPATRPLSESTTQPLKQKEAEPTP) form a disordered region.

It belongs to the glycosyl hydrolase 37 family. In terms of assembly, monomer.

The protein localises to the periplasm. The catalysed reaction is alpha,alpha-trehalose + H2O = alpha-D-glucose + beta-D-glucose. Its function is as follows. Provides the cells with the ability to utilize trehalose at high osmolarity by splitting it into glucose molecules that can subsequently be taken up by the phosphotransferase-mediated uptake system. This Escherichia coli O7:K1 (strain IAI39 / ExPEC) protein is Periplasmic trehalase.